Consider the following 137-residue polypeptide: Large ribosomal subunit protein bL17 (137 aa).

It belongs to the bacterial ribosomal protein bL17 family. In terms of assembly, part of the 50S ribosomal subunit. Contacts protein L32.

This chain is Large ribosomal subunit protein bL17, found in Caulobacter vibrioides (strain ATCC 19089 / CIP 103742 / CB 15) (Caulobacter crescentus).